The chain runs to 319 residues: MYNKTVSINLDSRCNASCDHCCFSSSPTSTTRMEKEYIRELVTEFAKNKTIQVISFTGGEVFLDYKFLKELMEIIKPYEKQITLISNGFWGLSKKKVQEYFHDMNSLNVIALTISYDEYHAPFVKSSSIKNILEHSRKYPDIDISLNMAVTKDKMSNHILEELGDSILGVKITKFPMISVGAAKTRIKQENIHKFYSLEDEDSLHCPGYDIVYHHDGEIYPCCSPAIFETKITLREEYNQSFERTVEKLNSNLLLFILRKEGFKWFLNILKENNKIEEFDIPYEFSSICGVCGSLFNSAEKINYFYPYMEKYYNENFKV.

Residues Met-1–His-214 form the Radical SAM core domain. The [4Fe-4S] cluster site is built by Cys-14, Cys-18, and Cys-21.

It depends on [4Fe-4S] cluster as a cofactor.

Its function is as follows. Required for production of the modified peptide YydF. May activate a metalloenzyme (Potential). The chain is Putative peptide biosynthesis protein YydG (yydG) from Bacillus subtilis (strain 168).